Reading from the N-terminus, the 362-residue chain is Peptide chain release factor 1 (362 aa).

Q236 is modified (N5-methylglutamine).

This sequence belongs to the prokaryotic/mitochondrial release factor family. In terms of processing, methylated by PrmC. Methylation increases the termination efficiency of RF1.

The protein resides in the cytoplasm. In terms of biological role, peptide chain release factor 1 directs the termination of translation in response to the peptide chain termination codons UAG and UAA. The sequence is that of Peptide chain release factor 1 from Lactobacillus johnsonii (strain CNCM I-12250 / La1 / NCC 533).